The following is a 445-amino-acid chain: Eukaryotic translation initiation factor 3 subunit E (445 aa).

In terms of domain architecture, PCI spans 230–403; sequence FFNHVKGRDL…GHVVMGAQPL (174 aa).

Belongs to the eIF-3 subunit E family. As to quaternary structure, component of the eukaryotic translation initiation factor 3 (eIF-3) complex.

The protein resides in the cytoplasm. In terms of biological role, component of the eukaryotic translation initiation factor 3 (eIF-3) complex, which is involved in protein synthesis of a specialized repertoire of mRNAs and, together with other initiation factors, stimulates binding of mRNA and methionyl-tRNAi to the 40S ribosome. The eIF-3 complex specifically targets and initiates translation of a subset of mRNAs involved in cell proliferation. The chain is Eukaryotic translation initiation factor 3 subunit E (eIF3-S6) from Bombyx mori (Silk moth).